The primary structure comprises 193 residues: CRIB domain-containing protein RIC5 (193 aa).

The CRIB domain maps to 29–42 (IGIPTDVKHVAHIG). Residues 42-193 (GWEGPSATTP…CAGLGSSTGR (152 aa)) form a disordered region. Residues 55–67 (HDFKPTDQTKTET) are compositionally biased toward basic and acidic residues. The span at 90-100 (STGNNSPTESP) shows a compositional bias: polar residues. The span at 123 to 134 (GSGSESGSGLEL) shows a compositional bias: low complexity.

In terms of assembly, interacts with ARAC11/ROP1. Expressed in flowers and pollen.

Its subcellular location is the cell membrane. In terms of biological role, functions as a downstream effector of Rho-related GTP binding proteins of the 'Rho of Plants' (ROPs) family. Participates in the propagation of ROP GTPase signals in specific cellular responses. Is involved in pollen tube growth regulation through its interaction with ARAC11/ROP1. The sequence is that of CRIB domain-containing protein RIC5 (RIC5) from Arabidopsis thaliana (Mouse-ear cress).